The chain runs to 80 residues: Cytochrome c oxidase subunit 7B, mitochondrial (80 aa).

The N-terminal 24 residues, Met-1–Gln-24, are a transit peptide targeting the mitochondrion. Over Ile-25–Asp-32 the chain is Mitochondrial matrix. Residues Phe-33 to Gln-59 form a helical membrane-spanning segment. Residues Ile-60–Gln-80 are Mitochondrial intermembrane-facing.

This sequence belongs to the cytochrome c oxidase VIIb family. Component of the cytochrome c oxidase (complex IV, CIV), a multisubunit enzyme composed of 14 subunits. The complex is composed of a catalytic core of 3 subunits MT-CO1, MT-CO2 and MT-CO3, encoded in the mitochondrial DNA, and 11 supernumerary subunits COX4I1 (or COX4I2), COX5A, COX5B, COX6A2 (or COX6A1), COX6B1 (or COX6B2), COX6C, COX7A1 (or COX7A2), COX7B, COX7C, COX8B and NDUFA4, which are encoded in the nuclear genome. The complex exists as a monomer or a dimer and forms supercomplexes (SCs) in the inner mitochondrial membrane with NADH-ubiquinone oxidoreductase (complex I, CI) and ubiquinol-cytochrome c oxidoreductase (cytochrome b-c1 complex, complex III, CIII), resulting in different assemblies (supercomplex SCI(1)III(2)IV(1) and megacomplex MCI(2)III(2)IV(2)).

The protein resides in the mitochondrion inner membrane. It functions in the pathway energy metabolism; oxidative phosphorylation. In terms of biological role, component of the cytochrome c oxidase, the last enzyme in the mitochondrial electron transport chain which drives oxidative phosphorylation. The respiratory chain contains 3 multisubunit complexes succinate dehydrogenase (complex II, CII), ubiquinol-cytochrome c oxidoreductase (cytochrome b-c1 complex, complex III, CIII) and cytochrome c oxidase (complex IV, CIV), that cooperate to transfer electrons derived from NADH and succinate to molecular oxygen, creating an electrochemical gradient over the inner membrane that drives transmembrane transport and the ATP synthase. Cytochrome c oxidase is the component of the respiratory chain that catalyzes the reduction of oxygen to water. Electrons originating from reduced cytochrome c in the intermembrane space (IMS) are transferred via the dinuclear copper A center (CU(A)) of subunit 2 and heme A of subunit 1 to the active site in subunit 1, a binuclear center (BNC) formed by heme A3 and copper B (CU(B)). The BNC reduces molecular oxygen to 2 water molecules using 4 electrons from cytochrome c in the IMS and 4 protons from the mitochondrial matrix. Plays a role in proper central nervous system (CNS) development in vertebrates. In Bos taurus (Bovine), this protein is Cytochrome c oxidase subunit 7B, mitochondrial (COX7B).